A 661-amino-acid chain; its full sequence is Acetyl-coenzyme A synthetase (661 aa).

Residues Arg-197–Lys-200 and Thr-320 contribute to the CoA site. Residues Gly-396–Pro-398, Asp-420–Thr-425, Asp-511, and Arg-526 contribute to the ATP site. Ser-534 is a CoA binding site. Arg-537 contacts ATP. Val-548 and Val-553 together coordinate Mg(2+). At Lys-620 the chain carries N6-acetyllysine.

Belongs to the ATP-dependent AMP-binding enzyme family. It depends on Mg(2+) as a cofactor. In terms of processing, acetylated. Deacetylation by the SIR2-homolog deacetylase activates the enzyme.

It carries out the reaction acetate + ATP + CoA = acetyl-CoA + AMP + diphosphate. Catalyzes the conversion of acetate into acetyl-CoA (AcCoA), an essential intermediate at the junction of anabolic and catabolic pathways. AcsA undergoes a two-step reaction. In the first half reaction, AcsA combines acetate with ATP to form acetyl-adenylate (AcAMP) intermediate. In the second half reaction, it can then transfer the acetyl group from AcAMP to the sulfhydryl group of CoA, forming the product AcCoA. In Leptospira interrogans serogroup Icterohaemorrhagiae serovar copenhageni (strain Fiocruz L1-130), this protein is Acetyl-coenzyme A synthetase.